The following is a 374-amino-acid chain: DNA replication and repair protein RecF (374 aa).

30-37 (GENAQGKT) is an ATP binding site.

This sequence belongs to the RecF family.

It is found in the cytoplasm. Its function is as follows. The RecF protein is involved in DNA metabolism; it is required for DNA replication and normal SOS inducibility. RecF binds preferentially to single-stranded, linear DNA. It also seems to bind ATP. The protein is DNA replication and repair protein RecF of Pediococcus pentosaceus (strain ATCC 25745 / CCUG 21536 / LMG 10740 / 183-1w).